The chain runs to 154 residues: Endoribonuclease YbeY (154 aa).

Zn(2+) contacts are provided by His113, His117, and His123.

It belongs to the endoribonuclease YbeY family. Requires Zn(2+) as cofactor.

The protein localises to the cytoplasm. Functionally, single strand-specific metallo-endoribonuclease involved in late-stage 70S ribosome quality control and in maturation of the 3' terminus of the 16S rRNA. The chain is Endoribonuclease YbeY from Vibrio cholerae serotype O1 (strain ATCC 39315 / El Tor Inaba N16961).